A 523-amino-acid chain; its full sequence is MGSSKSKPKDPSQRRRSLEPPDSTHHGGFPASQTPNKTAAPDTHRTPSRSFGTVATELKLFGDFNTSDTVTSPQRAGALAGSVTTFGTRESRIETDLSFKKRERLQIVNNTEGTWWLAHSLTTGQTGYIPSNYVAPSDSIQAEEWYFGKITRRESGRLLLNPENPRGTFLVRESETTKGAYCLSVSDFDNAKGLNVKHYKIRKLDSGGFYITSRTQFSSLQQLVAYYSKHADGLCHRLTNVCPTSKPQTQGLAKDAWEIPRESLRLEVKLGQGYFGEVWMGTWNGTTRVAIKTLKPGTMSPEAFLQEAQVMKKLRHEKLVQLYAMVSEEPIYIVIEYMSKGSLLDFLKGEMGKYLRLPQLVEMAAQIASGMAYVERMNYVHRDLRAANILVGENLVCKVADFGLARLIEDNEYTARPGARFPVKWTAPEAALYGRFTIKSDVWSFGILLTELTTKGRVPYPGMVNGEVLDRVERGYRMPCPPECPESLHDLMCQCWRKDPEERPTFEYLQAQLLPACVLKIAE.

The tract at residues 1 to 50 (MGSSKSKPKDPSQRRRSLEPPDSTHHGGFPASQTPNKTAAPDTHRTPSRS) is disordered. Gly-2 carries the N-myristoyl glycine; by host lipid modification. The span at 7-25 (KPKDPSQRRRSLEPPDSTH) shows a compositional bias: basic and acidic residues. In terms of domain architecture, SH3 spans 71–139 (TSPQRAGALA…PSNYVAPSDS (69 aa)). In terms of domain architecture, SH2 spans 145–242 (WYFGKITRRE…GLCHRLTNVC (98 aa)). Residues 264-514 (LRLEVKLGQG…TFEYLQAQLL (251 aa)) enclose the Protein kinase domain. Residues 270-278 (LGQGYFGEV) and Lys-292 each bind ATP. The active-site Proton acceptor is the Asp-383. Tyr-413 is subject to Phosphotyrosine; by autocatalysis.

Belongs to the protein kinase superfamily. Tyr protein kinase family. SRC subfamily. As to quaternary structure, homodimer. In terms of processing, the phosphorylated form is termed pp60v-src.

It carries out the reaction L-tyrosyl-[protein] + ATP = O-phospho-L-tyrosyl-[protein] + ADP + H(+). In terms of biological role, this phosphoprotein, required for both the initiation and the maintenance of neoplastic transformation, is a protein kinase that catalyzes the phosphorylation of tyrosine residues in vitro. In Gallus gallus (Chicken), this protein is Tyrosine-protein kinase transforming protein Src (V-SRC).